The following is a 348-amino-acid chain: Hereditary hemochromatosis protein homolog (348 aa).

Positions 1 to 22 (MGPRARPALFFLILLRTVAAQG) are cleaved as a signal peptide. The interval 23-114 (RPPRSHSLRY…IMDNHNHSKE (92 aa)) is alpha-1. Over 23–306 (RPPRSHSLRY…WEPSLSNTLV (284 aa)) the chain is Extracellular. N-linked (GlcNAc...) asparagine glycans are attached at residues Asn-110, Asn-130, and Asn-234. Residues 115–205 (SHTLQVILGC…ELGRGVLDQQ (91 aa)) form an alpha-2 region. Intrachain disulfides connect Cys-124–Cys-187 and Cys-225–Cys-282. The alpha-3 stretch occupies residues 206 to 297 (VPPLVKVTHH…GLDQPLTATW (92 aa)). The 90-residue stretch at 207–296 (PPLVKVTHHV…PGLDQPLTAT (90 aa)) folds into the Ig-like C1-type domain. Residues 298–306 (EPSLSNTLV) are connecting peptide. Residues 307–330 (TGVISGIAVCVIIFLIGILFRILR) form a helical membrane-spanning segment. Residues 331-348 (KRQASRGAMGDYVLAECE) lie on the Cytoplasmic side of the membrane.

Belongs to the MHC class I family. As to quaternary structure, binds TFR through the extracellular domain in a pH-dependent manner.

Its subcellular location is the cell membrane. In terms of biological role, binds to transferrin receptor (TFR) and reduces its affinity for iron-loaded transferrin. The sequence is that of Hereditary hemochromatosis protein homolog (HFE) from Dicerorhinus sumatrensis (Sumatran rhinoceros).